Here is a 942-residue protein sequence, read N- to C-terminus: Endoprotease bli-4 (942 aa).

The first 22 residues, 1–22 (MRISIGRIAWQILAVLIAVAFT), serve as a signal peptide directing secretion. The propeptide occupies 23–116 (IEHDSICDES…EQRPKKRVKR (94 aa)). Topologically, residues 117–871 (DYILLDNDVH…TLLIDSNKSS (755 aa)) are lumenal. Position 124 (D124) interacts with Ca(2+). A disordered region spans residues 130–160 (PFRRSVLNRDGTRRAQRQQPQSPREIPSLPF). Residues 168–483 (QWYLHGGAVG…YGLIDGGALV (316 aa)) enclose the Peptidase S8 domain. N195 carries N-linked (GlcNAc...) asparagine glycosylation. D202 (charge relay system) is an active-site residue. D203 provides a ligand contact to substrate. Residues D211, D223, D228, and D230 each contribute to the Ca(2+) site. The interval 211 to 242 (DLAANYDPLASTDINDHDDDPTPQNNGDNKHG) is disordered. Residue 238–239 (DN) coordinates substrate. The active-site Charge relay system is the H241. Ca(2+)-binding residues include L252, N255, Q257, and G259. 2 cysteine pairs are disulfide-bonded: C258–C407 and C350–C380. Residues E283, 300 to 305 (SWGPED), D311, and 339 to 342 (ASGN) contribute to the substrate site. D305 contributes to the Ca(2+) binding site. Ca(2+) is bound at residue D348. Substrate-binding residues include D353 and Y355. Position 378 (E378) interacts with Ca(2+). The active-site Charge relay system is the S415. S415 contributes to the substrate binding site. The 139-residue stretch at 491–629 (TVPEQHICTY…TLLLYGTADP (139 aa)) folds into the P/Homo B domain. A disulfide bridge links C498 with C527. N-linked (GlcNAc...) asparagine glycosylation occurs at N519. FU repeat units lie at residues 674-723 (NCHD…YYLD), 725-777 (DKCK…LVAD), and 804-850 (GKCD…STKS). An N-linked (GlcNAc...) asparagine glycan is attached at N868. Residues 872–892 (GFGLMFWIVVSLIAACGICAC) traverse the membrane as a helical segment. The Cytoplasmic portion of the chain corresponds to 893–942 (KKCASETKSSNVEYAPLAQYNATNGAINLGAHTDDEDDDEDEVFVNPQIV). The disordered stretch occupies residues 922 to 942 (GAHTDDEDDDEDEVFVNPQIV). Positions 926 to 935 (DDEDDDEDEV) are enriched in acidic residues.

This sequence belongs to the peptidase S8 family. Furin subfamily. The cofactor is Ca(2+). As to expression, in larvae and adults, expressed in all hypodermal cells, vulva and ventral nerve cords. In terms of tissue distribution, most highly expressed isoform in the embryonic epidermis. Expressed primarily in the germline. As to expression, expressed primarily in pharyngeal epithelial cells.

The protein localises to the membrane. Functionally, serine endoprotease which cleaves proproteins at paired basic amino acids at the consensus RX(K/R)R motif. Involved in N-terminal processing of cuticle collagens and plays a role in cuticle biosynthesis. May cleave both sqt-3 and dpy-17 collagens to promote their secretion. Acts in ASEL sensory neurons to regulate high salt chemotaxis responses probably by cleaving insulin-like protein ins-6 into its mature and active form. Essential for embryonic and larval development. Involved in cuticle biosynthesis but dispensable for larval development. This is Endoprotease bli-4 (bli-4) from Caenorhabditis elegans.